We begin with the raw amino-acid sequence, 228 residues long: ATP synthase subunit a (228 aa).

The next 6 membrane-spanning stretches (helical) occupy residues 19 to 39 (AIYIFHFLLVVAITMFIAVAV), 81 to 101 (LIATIGFIVFLSNIIGLIPGF), 107 to 127 (SLNLTLSLTLCVFFYYHFEGI), 136 to 156 (FAGFCGPVKAIAPFMFVIEVI), 178 to 198 (LFLLVMLTLAPVLVPMIPYAL), and 204 to 224 (ILQAFIFMVLSYVYLAGAVVV).

This sequence belongs to the ATPase A chain family. F-type ATPases have 2 components, CF(1) - the catalytic core - and CF(0) - the membrane proton channel. CF(1) has five subunits: alpha(3), beta(3), gamma(1), delta(1), epsilon(1). CF(0) has three main subunits: a(1), b(2) and c(9-12). The alpha and beta chains form an alternating ring which encloses part of the gamma chain. CF(1) is attached to CF(0) by a central stalk formed by the gamma and epsilon chains, while a peripheral stalk is formed by the delta and b chains.

The protein resides in the cell inner membrane. Functionally, key component of the proton channel; it plays a direct role in the translocation of protons across the membrane. The polypeptide is ATP synthase subunit a (Campylobacter hominis (strain ATCC BAA-381 / DSM 21671 / CCUG 45161 / LMG 19568 / NCTC 13146 / CH001A)).